The following is a 157-amino-acid chain: Arginine regulator (157 aa).

It belongs to the ArgR family.

Its subcellular location is the cytoplasm. It participates in amino-acid degradation; L-arginine degradation via ADI pathway. Its function is as follows. Regulates the transcription of the arc operon, involved in arginine catabolism. This is Arginine regulator (argR1) from Streptococcus pyogenes serotype M3 (strain ATCC BAA-595 / MGAS315).